Reading from the N-terminus, the 993-residue chain is MDQSVAIQETLVEGEYCVIAVQGVLCKGDSRQSRLLGLVRYRLENDAQEHALFLYTHRRMAITGDDVSLDQIVPLSKDFMLEEVSPDGELYILGSDVTVQLNTAELKLVFQLPFGSHTRTFLQEVARACPGFDPETRDPEFEWLSRHTCAEPDAESPKPREWNSDPGTRSGFAPIGGSRHQSRNARRGLEDVLPRGPGYILLWGGAAEEPEFLLAEEMHEGGPVRGRRPLAGRRDEALEEADWEMSAGGGSRERDCAGVSNVDSSRPNGRGPDQPSGARCPEKPENSLTRQNKSKSDMSEKVRSATVTVSDKAHILSVQKFGLRDTIVRSHLVQKEENYTYIQNFRFFVGTYNVNGQSPKECLRPWLSHSALAPDVYCVGFQELDLSKEAFFFHDTPKEEEWFKAVSESLHPDAKYAKVKFVRLVGIMLLLYVKQEHAAYISEVEAETVGTGIMGRMGNKGGVAIRFQLHNTSICVVNSHLAAHTEEYERRNQDYRDICSRMQFPQVDPSQPPLTINKHDVILWLGDLNYRIEELDVGKVKKLVEEKAFQTLYAHDQLKIQVAARTIFDGFTEGEITFQPTYKYDTGSDDWDTSEKCRAPAWCDRILWKGKNITQLSYQSHMALKTSDHKPVSSVFDIGVRVVNEELYRKTLEEIVRSLDKMENANIPSVTLSKREFCFENVKYMQLQTESFTIHNSQVPCQFEFINKPDEESYCKQWLTARPSKGFLLPDSHVEIELELFVNKSTATKLNSGKDTIEDILVLHLERGKDYFLSVSGNYLPSCFGSPIHTLCYMREPILDLPLKTVSDLTLMSVQTADDRSQLENPMEIPKELWMMVDYLYRNAVQQEDLFQQPGLRPEFDHIRDCLDTGMIDQLCANNHSVAEALLLFLESLPEPVICYSAYHSCLECSGNYAASKQIILTLPSFHKNVFNYLMAFLQELLKNSANNHLDENILASIFGSLLLRNPARHQKLDMAEKKKAQEFIHQFLCGPL.

Residues 22-148 enclose the PH domain; sequence QGVLCKGDSR…PEFEWLSRHT (127 aa). Composition is skewed to basic and acidic residues over residues 149–163 and 294–303; these read CAEP…REWN and SKSDMSEKVR. Disordered regions lie at residues 149–191 and 236–304; these read CAEP…GLED and EALE…KVRS. The tract at residues 342–668 is 5-phosphatase; it reads IQNFRFFVGT…LDKMENANIP (327 aa). The Mg(2+) site is built by Asn-355 and Glu-383. Substrate is bound by residues Glu-383, 459 to 460, 582 to 583, and 596 to 598; these read NK, YK, and KCR. The interval 669–782 is ASH; that stretch reads SVTLSKREFC…LSVSGNYLPS (114 aa). In terms of domain architecture, Rho-GAP spans 821 to 993; it reads SQLENPMEIP…FIHQFLCGPL (173 aa). Position 990 is a cysteine methyl ester (Cys-990). Cys-990 carries S-farnesyl cysteine lipidation. Positions 991-993 are cleaved as a propeptide — removed in mature form; sequence GPL.

It belongs to the inositol 1,4,5-trisphosphate 5-phosphatase type II family. As to quaternary structure, interacts with APPL1, PHETA1 and PHETA2. Interacts with several Rab GTPases, at least RAB1A, RAB2A, RAB5A, RAB6A, RAB8A, RAB9A and RAB33B; these interactions may play a dual role in targeting INPP5B to the specific membranes and stimulating its phosphatase activity. Interacts preferentially with non-phosphorylated RAB8A; phosphorylation of RAB8A on 'Thr-72' disrupts this interaction. Interacts with INPP5F. Isoprenylation at Cys-990 may be required for localization at the membrane. Post-translationally, may be proteolytically cleaved after Lys-320 as inferred from N-terminal protein sequence of the 75 kda form. Detected in kidney, liver, brain, lung and testis (at protein level). Detected in kidney and liver, and at lower levels in brain, lung and testis.

The protein localises to the cytoplasm. It is found in the cytosol. The protein resides in the endoplasmic reticulum-Golgi intermediate compartment. Its subcellular location is the early endosome membrane. It localises to the membrane. The protein localises to the cytoplasmic vesicle. It is found in the phagosome membrane. The catalysed reaction is a 1,2-diacyl-sn-glycero-3-phospho-(1D-myo-inositol-4,5-bisphosphate) + H2O = a 1,2-diacyl-sn-glycero-3-phospho-(1D-myo-inositol 4-phosphate) + phosphate. Functionally, hydrolyzes phosphatidylinositol 4,5-bisphosphate (PtIns(4,5)P2) and the signaling molecule phosphatidylinositol 1,4,5-trisphosphate (PtIns(1,4,5)P3), and thereby modulates cellular signaling events. The sequence is that of Type II inositol 1,4,5-trisphosphate 5-phosphatase (Inpp5b) from Mus musculus (Mouse).